Reading from the N-terminus, the 607-residue chain is F-box protein At-B (607 aa).

The F-box domain maps to 9-47 (LAEEILKRLDLENLCSVACVSTTLRSAVVSGVLPSLTSL). LRR repeat units lie at residues 51–76 (VFSP…TLNC), 77–99 (LRLN…HLLR), 100–125 (CSLL…TLEM), 130–155 (SPDV…QLNI), 228–253 (LDLI…DLED), 262–286 (DNDL…SLVR), 295–320 (FKRI…RLGG), 321–346 (FPKV…EVRG), 347–372 (AFLL…RLST), 373–397 (CPLI…DLGS), 398–422 (CKSI…NLAG), 424–447 (DVTD…SLRG), 448–477 (CRRV…DLGH), 478–503 (MPGI…SIRS), 504–536 (CFHV…NVHN), and 537–563 (CVSL…GMGQ).

The chain is F-box protein At-B (ATB) from Arabidopsis thaliana (Mouse-ear cress).